Here is a 498-residue protein sequence, read N- to C-terminus: Probable lysophospholipase BODYGUARD 3 (498 aa).

The first 55 residues, 1 to 55 (MAVMKIKGAATVAGTWLNEAVSFVVFCILDIVDSFLCLLYKAADYLFEAEWKPCY), serve as a signal peptide directing secretion. Residue C56 is the site of N-palmitoyl cysteine attachment. The AB hydrolase-1 domain occupies 220-326 (VLFIHGFISS…LTLLAPPYYP (107 aa)). Residue H224 is part of the active site. Residue S297 is the Nucleophile of the active site. Active-site charge relay system residues include D446 and H474.

It is found in the cell membrane. It localises to the secreted. The protein localises to the cell wall. Functionally, involved in cuticle development and morphogenesis. In Arabidopsis thaliana (Mouse-ear cress), this protein is Probable lysophospholipase BODYGUARD 3.